The primary structure comprises 84 residues: Small ribosomal subunit protein uS17 (84 aa).

This sequence belongs to the universal ribosomal protein uS17 family. As to quaternary structure, part of the 30S ribosomal subunit.

Its function is as follows. One of the primary rRNA binding proteins, it binds specifically to the 5'-end of 16S ribosomal RNA. The sequence is that of Small ribosomal subunit protein uS17 from Shigella boydii serotype 18 (strain CDC 3083-94 / BS512).